The primary structure comprises 283 residues: MPELPEVEVVRRGLHSHVVGKTIGAVRVHHPRAVRRHEAGPADLTARLLGARITGTDRRGKYLWLLLDGRDTALVVHLGMSGQMLLGAVPRAEHVRISALLDDGTVLSFADQRTFGGWMLADLLEVDGSVVPEPVAHLARDPLDPRFDADAVVKVLRRKHSEIKRQLLDQQVVSGIGNIYADEALWRAKVHGARIADALTRKQLTAVLDAAADVMRDALAKGGTSFDSLYVNVNGESGYFDRSLDAYGREGESCRRCGAVMRREKFMNRSSFYCPKCQPRPRL.

The Schiff-base intermediate with DNA role is filled by Pro-2. The Proton donor role is filled by Glu-3. Lys-61 serves as the catalytic Proton donor; for beta-elimination activity. DNA-binding residues include His-94, Arg-113, and Lys-159. The FPG-type zinc finger occupies 245–279 (DAYGREGESCRRCGAVMRREKFMNRSSFYCPKCQP). The Proton donor; for delta-elimination activity role is filled by Arg-269.

The protein belongs to the FPG family. In terms of assembly, monomer. Requires Zn(2+) as cofactor.

The catalysed reaction is Hydrolysis of DNA containing ring-opened 7-methylguanine residues, releasing 2,6-diamino-4-hydroxy-5-(N-methyl)formamidopyrimidine.. It catalyses the reaction 2'-deoxyribonucleotide-(2'-deoxyribose 5'-phosphate)-2'-deoxyribonucleotide-DNA = a 3'-end 2'-deoxyribonucleotide-(2,3-dehydro-2,3-deoxyribose 5'-phosphate)-DNA + a 5'-end 5'-phospho-2'-deoxyribonucleoside-DNA + H(+). In terms of biological role, involved in base excision repair of DNA damaged by oxidation or by mutagenic agents. Acts as a DNA glycosylase that recognizes and removes damaged bases. Has a preference for oxidized purines, such as 7,8-dihydro-8-oxoguanine (8-oxoG). Has AP (apurinic/apyrimidinic) lyase activity and introduces nicks in the DNA strand. Cleaves the DNA backbone by beta-delta elimination to generate a single-strand break at the site of the removed base with both 3'- and 5'-phosphates. This is Formamidopyrimidine-DNA glycosylase from Mycobacterium avium (strain 104).